Consider the following 194-residue polypeptide: Gonadal protein gdl (194 aa).

The protein belongs to the gonadal family. In terms of tissue distribution, in stage 6-14 egg chamber nurse cells and oocytes of adult females and spermatocyte cysts and bundles of maturing sperm of larval, pupal and adult males.

This chain is Gonadal protein gdl (gdl), found in Drosophila melanogaster (Fruit fly).